A 342-amino-acid polypeptide reads, in one-letter code: Glycerol-3-phosphate dehydrogenase [NAD(P)+] (342 aa).

NADPH-binding residues include Trp11, Arg33, and Lys107. Lys107, Gly143, and Ser145 together coordinate sn-glycerol 3-phosphate. Ala147 serves as a coordination point for NADPH. Sn-glycerol 3-phosphate contacts are provided by Lys198, Asp251, Ser261, Arg262, and Asn263. Lys198 (proton acceptor) is an active-site residue. Residue Arg262 coordinates NADPH. NADPH is bound by residues Val286 and Glu288.

Belongs to the NAD-dependent glycerol-3-phosphate dehydrogenase family.

The protein resides in the cytoplasm. The enzyme catalyses sn-glycerol 3-phosphate + NAD(+) = dihydroxyacetone phosphate + NADH + H(+). The catalysed reaction is sn-glycerol 3-phosphate + NADP(+) = dihydroxyacetone phosphate + NADPH + H(+). Its pathway is membrane lipid metabolism; glycerophospholipid metabolism. In terms of biological role, catalyzes the reduction of the glycolytic intermediate dihydroxyacetone phosphate (DHAP) to sn-glycerol 3-phosphate (G3P), the key precursor for phospholipid synthesis. In Paracidovorax citrulli (strain AAC00-1) (Acidovorax citrulli), this protein is Glycerol-3-phosphate dehydrogenase [NAD(P)+].